The following is a 380-amino-acid chain: Glucose-1-phosphate adenylyltransferase (380 aa).

Residues glycine 164, 179 to 180 (EK), and serine 190 contribute to the alpha-D-glucose 1-phosphate site.

It belongs to the bacterial/plant glucose-1-phosphate adenylyltransferase family. As to quaternary structure, homotetramer.

The catalysed reaction is alpha-D-glucose 1-phosphate + ATP + H(+) = ADP-alpha-D-glucose + diphosphate. It participates in glycan biosynthesis; glycogen biosynthesis. Its function is as follows. Involved in the biosynthesis of ADP-glucose, a building block required for the elongation reactions to produce glycogen. Catalyzes the reaction between ATP and alpha-D-glucose 1-phosphate (G1P) to produce pyrophosphate and ADP-Glc. The chain is Glucose-1-phosphate adenylyltransferase from Streptococcus sanguinis (strain SK36).